The sequence spans 307 residues: Bifunctional protein FolD (307 aa).

NADP(+)-binding positions include glycine 165–serine 167, serine 190, and isoleucine 231.

This sequence belongs to the tetrahydrofolate dehydrogenase/cyclohydrolase family. As to quaternary structure, homodimer.

It catalyses the reaction (6R)-5,10-methylene-5,6,7,8-tetrahydrofolate + NADP(+) = (6R)-5,10-methenyltetrahydrofolate + NADPH. It carries out the reaction (6R)-5,10-methenyltetrahydrofolate + H2O = (6R)-10-formyltetrahydrofolate + H(+). Its pathway is one-carbon metabolism; tetrahydrofolate interconversion. Its function is as follows. Catalyzes the oxidation of 5,10-methylenetetrahydrofolate to 5,10-methenyltetrahydrofolate and then the hydrolysis of 5,10-methenyltetrahydrofolate to 10-formyltetrahydrofolate. The sequence is that of Bifunctional protein FolD from Koribacter versatilis (strain Ellin345).